The sequence spans 226 residues: 7-cyano-7-deazaguanine synthase (226 aa).

10–20 contacts ATP; the sequence is LSGGLDSATAA. 4 residues coordinate Zn(2+): Cys191, Cys199, Cys202, and Cys205.

The protein belongs to the QueC family. Requires Zn(2+) as cofactor.

It carries out the reaction 7-carboxy-7-deazaguanine + NH4(+) + ATP = 7-cyano-7-deazaguanine + ADP + phosphate + H2O + H(+). It functions in the pathway purine metabolism; 7-cyano-7-deazaguanine biosynthesis. Functionally, catalyzes the ATP-dependent conversion of 7-carboxy-7-deazaguanine (CDG) to 7-cyano-7-deazaguanine (preQ(0)). This chain is 7-cyano-7-deazaguanine synthase, found in Synechococcus sp. (strain CC9605).